A 245-amino-acid chain; its full sequence is tRNA pseudouridine synthase A 2 (245 aa).

Asp53 acts as the Nucleophile in catalysis. Tyr111 provides a ligand contact to substrate.

The protein belongs to the tRNA pseudouridine synthase TruA family. Homodimer.

The enzyme catalyses uridine(38/39/40) in tRNA = pseudouridine(38/39/40) in tRNA. Functionally, formation of pseudouridine at positions 38, 39 and 40 in the anticodon stem and loop of transfer RNAs. This chain is tRNA pseudouridine synthase A 2, found in Bacillus cereus (strain ATCC 14579 / DSM 31 / CCUG 7414 / JCM 2152 / NBRC 15305 / NCIMB 9373 / NCTC 2599 / NRRL B-3711).